Here is a 52-residue protein sequence, read N- to C-terminus: Keratin-associated protein 19-2 (52 aa).

Belongs to the KRTAP type 19 family. Interacts with hair keratins.

In terms of biological role, in the hair cortex, hair keratin intermediate filaments are embedded in an interfilamentous matrix, consisting of hair keratin-associated proteins (KRTAP), which are essential for the formation of a rigid and resistant hair shaft through their extensive disulfide bond cross-linking with abundant cysteine residues of hair keratins. The matrix proteins include the high-sulfur and high-glycine-tyrosine keratins. This is Keratin-associated protein 19-2 (KRTAP19-2) from Homo sapiens (Human).